The sequence spans 427 residues: Enolase (427 aa).

Q163 is a binding site for (2R)-2-phosphoglycerate. E205 functions as the Proton donor in the catalytic mechanism. The Mg(2+) site is built by D242, E285, and D312. (2R)-2-phosphoglycerate-binding residues include K337, R366, S367, and K388. K337 serves as the catalytic Proton acceptor.

This sequence belongs to the enolase family. Requires Mg(2+) as cofactor.

Its subcellular location is the cytoplasm. It localises to the secreted. It is found in the cell surface. The enzyme catalyses (2R)-2-phosphoglycerate = phosphoenolpyruvate + H2O. Its pathway is carbohydrate degradation; glycolysis; pyruvate from D-glyceraldehyde 3-phosphate: step 4/5. Functionally, catalyzes the reversible conversion of 2-phosphoglycerate (2-PG) into phosphoenolpyruvate (PEP). It is essential for the degradation of carbohydrates via glycolysis. This chain is Enolase, found in Dechloromonas aromatica (strain RCB).